Here is a 431-residue protein sequence, read N- to C-terminus: MDSIQIVGGKKLKGTIPISGAKNAALPLMIAALLTEETVTLDNIPHLADVELLIRILNNHGVGYAVDGQKSHHDCIDSRTIHFTAQKITTTYAPYELVRKMRASFWVIGPLLARCHEAYVSLPGGCAIGTRPVNFILEGLKTLGARIAIENGYVHAKAPKGLKGAHYHFPKVTVGGTHVMLMAAATANGTTLLENAACEPEVTNLIQALNAMGAKITGEGTSTLTIEGVKKLHGARISVIADRIEAGTYAMVVAMTGGNVLLKNANPHHLTQVLEVLQKTGLDIEIKPQGLHLKRNPRQTKIMPVNIKTGPYPAFPTDLQAQFMALMTRAQGTACITETIFENRFMHVQELTRLGAQIKLDGQTATVYGREHLQGAPVMATDLRASVSLVIAALAAKGESVINRVYHLDRGFERLEEKLARCGAIIQRITV.

22-23 (KN) serves as a coordination point for phosphoenolpyruvate. Arg-102 is a binding site for UDP-N-acetyl-alpha-D-glucosamine. Cys-126 serves as the catalytic Proton donor. The residue at position 126 (Cys-126) is a 2-(S-cysteinyl)pyruvic acid O-phosphothioketal. 2 residues coordinate UDP-N-acetyl-alpha-D-glucosamine: Asp-318 and Ile-340.

The protein belongs to the EPSP synthase family. MurA subfamily.

It localises to the cytoplasm. It catalyses the reaction phosphoenolpyruvate + UDP-N-acetyl-alpha-D-glucosamine = UDP-N-acetyl-3-O-(1-carboxyvinyl)-alpha-D-glucosamine + phosphate. It functions in the pathway cell wall biogenesis; peptidoglycan biosynthesis. Cell wall formation. Adds enolpyruvyl to UDP-N-acetylglucosamine. In Bartonella quintana (strain Toulouse) (Rochalimaea quintana), this protein is UDP-N-acetylglucosamine 1-carboxyvinyltransferase.